The sequence spans 429 residues: L-dopachrome tautomerase yellow-f (429 aa).

A signal peptide spans 1-23; sequence MLSLDVLLLCAISGFQLLISADG. N-linked (GlcNAc...) asparagine glycosylation is found at N133 and N372.

The protein belongs to the major royal jelly protein family.

It is found in the secreted. The catalysed reaction is L-dopachrome = 5,6-dihydroxyindole-2-carboxylate. It functions in the pathway pigment biosynthesis; melanin biosynthesis. Tautomerization of L-dopachrome with decarboxylation to give 5,6-dihydroxyindole (DHI). Also catalyzes the tautomerization of the methyl ester of L-dopachrome and dopamine chrome. May play a role in melanization reactions during late pupal and adult stages. May play a role in melanization reactions during larval and early pupal stages. The sequence is that of L-dopachrome tautomerase yellow-f from Drosophila melanogaster (Fruit fly).